Here is a 1017-residue protein sequence, read N- to C-terminus: Adhesion G-protein coupled receptor G2 (1017 aa).

The first 37 residues, 1 to 37, serve as a signal peptide directing secretion; that stretch reads MVFSVRQCGHVGRTEEVLLTFKIFLVIICLHVVLVTS. The Extracellular segment spans residues 38–627; that stretch reads LEEDTDNSSL…TSVLPAQMMA (590 aa). N-linked (GlcNAc...) asparagine glycosylation is found at asparagine 44, asparagine 85, asparagine 99, asparagine 111, asparagine 117, asparagine 144, asparagine 162, asparagine 186, and asparagine 194. The interval 301–366 is disordered; that stretch reads PLSPQPSAPI…NTTSAPPVQT (66 aa). A compositionally biased stretch (low complexity) spans 308-320; the sequence is APIASSPAIDMPP. Polar residues-rich tracts occupy residues 321 to 335 and 344 to 366; these read QSET…THVS and SFSS…PVQT. Asparagine 357, asparagine 370, asparagine 435, asparagine 438, asparagine 456, asparagine 461, asparagine 528, asparagine 542, asparagine 547, asparagine 551, and asparagine 597 each carry an N-linked (GlcNAc...) asparagine glycan. The 158-residue stretch at 462–619 folds into the GAIN-B domain; it reads TTTFVAQDPA…GVLLDLSRTS (158 aa). Cystine bridges form between cysteine 570/cysteine 601 and cysteine 589/cysteine 603. The segment at 570–619 is GPS; that stretch reads CVFWDLGRNGGRGGWSDNGCSVKDRRLNETICTCSHLTSFGVLLDLSRTS. The tract at residues 608-619 is stachel; the sequence is SFGVLLDLSRTS. A helical transmembrane segment spans residues 628 to 648; the sequence is LTFITYIGCGLSSIFLSVTLV. The Cytoplasmic portion of the chain corresponds to 649–667; the sequence is TYIAFEKIRRDYPSKILIQ. A helical transmembrane segment spans residues 668 to 688; the sequence is LCAALLLLNLVFLLDSWIALY. At 689–693 the chain is on the extracellular side; sequence KMQGL. A helical membrane pass occupies residues 694-714; it reads CISVAVFLHYFLLVSFTWMGL. A disulfide bond links cysteine 694 and cysteine 778. Residues 715 to 737 are Cytoplasmic-facing; the sequence is EAFHMYLALVKVFNTYIRKYILK. The helical transmembrane segment at 738–758 threads the bilayer; the sequence is FCIVGWGVPAVVVTIILTISP. Residues 759-789 are Extracellular-facing; it reads DNYGLGSYGKFPNGSPDDFCWINNNAVFYIT. The chain crosses the membrane as a helical span at residues 790 to 810; sequence VVGYFCVIFLLNVSMFIVVLV. Residues 811 to 834 lie on the Cytoplasmic side of the membrane; the sequence is QLCRIKKKKQLGAQRKTSIQDLRS. A helical transmembrane segment spans residues 835-855; that stretch reads IAGLTFLLGITWGFAFFAWGP. Over 856–857 the chain is Extracellular; that stretch reads VN. The N-linked (GlcNAc...) asparagine glycan is linked to asparagine 857. A helical transmembrane segment spans residues 858 to 878; that stretch reads VTFMYLFAIFNTLQGFFIFIF. A 3beta-hydroxyandrost-5-en-17-one-binding site is contributed by asparagine 868. Residues 879 to 1017 lie on the Cytoplasmic side of the membrane; sequence YCVAKENVRK…RGSLHFIEQM (139 aa). The disordered stretch occupies residues 918–939; that stretch reads QTVNQGVSSSSNSLQSSSNSTN. Position 1010 is a phosphoserine (serine 1010).

It belongs to the G-protein coupled receptor 2 family. Adhesion G-protein coupled receptor (ADGR) subfamily. Heterodimer of 2 chains generated by proteolytic processing; the large extracellular N-terminal fragment and the membrane-bound C-terminal fragment predominantly remain associated and non-covalently linked. Interacts with CFTR. In terms of processing, proteolytically cleaved into 2 subunits, an extracellular subunit and a seven-transmembrane subunit. Highly glycosylated. Epididymis-specific expression (at protein level). Both subunits are associated with apical membranes of efferent ductule and proximal epididymal duct epithelia. Mainly expressed in the nonciliated principal cells of the proximal excurrent ducts. Specifically over-expressed in Ewing sarcomas but also up-regulated in a number of carcinomas derived from prostate, kidney or lung.

It localises to the apical cell membrane. Forms a heterodimer of 2 chains generated by proteolytic processing that remain associated through non-covalent interactions mediated by the GAIN-B domain. In the inactivated receptor, the Stachel sequence (also named stalk) is embedded in the GAIN-B domain, where it adopts a beta-strand conformation. On activation, the Stachel moves into the 7 transmembrane region and adopts a twisted hook-shaped configuration that forms contacts within the receptor, leading to coupling of a G-alpha protein, which activates signaling. The cleaved GAIN-B and N-terminal domains can then dissociate from the rest of the receptor. Deoxycorticosterone (DOC) acts as an antagonist of ADGRG2. Functionally, adhesion G-protein coupled receptor (aGPCR) for steroid hormones, such as dehydroepiandrosterone (DHEA; also named 3beta-hydroxyandrost-5-en-17-one) and androstenedione. Involved in a signal transduction pathway controlling epididymal function and male fertility. Ligand binding causes a conformation change that triggers signaling via guanine nucleotide-binding proteins (G proteins) and modulates the activity of downstream effectors, such as adenylate cyclase. ADGRG2 is coupled to G(s) G proteins and mediates activation of adenylate cyclase activity. Also able to couple with G(q) G proteins in vitro. Together with CFTR, required to promote fluid reabsorption within efferent ductule. The protein is Adhesion G-protein coupled receptor G2 of Homo sapiens (Human).